The primary structure comprises 478 residues: Leukotoxin secretion protein D (478 aa).

Residues 1–77 are Cytoplasmic-facing; the sequence is MKIWLSGIYE…LAVAIVLASV (77 aa). A helical membrane pass occupies residues 78 to 98; sequence SKVEIVATAPGKLTFSGRSKE. Topologically, residues 99–478 are periplasmic; it reads IKPIENTIVQ…ESVTESLRER (380 aa).

The protein belongs to the membrane fusion protein (MFP) (TC 8.A.1) family.

Its subcellular location is the cell inner membrane. In terms of biological role, involved in the transport of the Leukotoxin. In Pasteurella haemolytica-like sp. (strain 5943B), this protein is Leukotoxin secretion protein D (lktD).